The following is a 326-amino-acid chain: D-amino-acid oxidase (326 aa).

Residues Gly-18, Val-19, Thr-46, Thr-47, Ser-48, Ala-52, Ala-53, Val-162, and Ser-179 each coordinate FAD. D-proline is bound by residues Tyr-222 and Arg-277. D-serine-binding residues include Tyr-222 and Arg-277. FAD-binding residues include Arg-277, Gly-303, Gly-304, Gly-306, and Thr-308. Gly-304 is a binding site for D-proline. Gly-304 provides a ligand contact to D-serine.

The protein belongs to the DAMOX/DASOX family. Monomer. Requires FAD as cofactor.

It localises to the cytoplasm. The protein resides in the secreted. Its subcellular location is the cell wall. The catalysed reaction is a D-alpha-amino acid + O2 + H2O = a 2-oxocarboxylate + H2O2 + NH4(+). The enzyme catalyses D-valine + O2 + H2O = 3-methyl-2-oxobutanoate + H2O2 + NH4(+). It catalyses the reaction D-leucine + O2 + H2O = 4-methyl-2-oxopentanoate + H2O2 + NH4(+). It carries out the reaction D-isoleucine + O2 + H2O = (R)-3-methyl-2-oxopentanoate + H2O2 + NH4(+). The catalysed reaction is D-tyrosine + O2 + H2O = 3-(4-hydroxyphenyl)pyruvate + H2O2 + NH4(+). The enzyme catalyses D-threonine + O2 + H2O = (S)-3-hydroxy-2-oxobutanoate + H2O2 + NH4(+). Its activity is regulated as follows. Inhibited by benzoate and phenylmethylsulfonyl fluoride (PMSF). Weakly inhibited by anthranilate, crotonate, and the amino acid-modifying agents dithionitrobenzoic acid and diethyl pyrocarbonate. Not inhibited by malonate, meso-tartrate, D-malate, or the amino acid-modifying agents iodoacetic acid or butane-2,3-dione. In terms of biological role, catalyzes the oxidative deamination of D-amino acids with broad substrate specificity. The chain is D-amino-acid oxidase from Rubrobacter xylanophilus (strain DSM 9941 / JCM 11954 / NBRC 16129 / PRD-1).